The following is a 211-amino-acid chain: ATP phosphoribosyltransferase (211 aa).

It belongs to the ATP phosphoribosyltransferase family. Short subfamily. In terms of assembly, heteromultimer composed of HisG and HisZ subunits.

Its subcellular location is the cytoplasm. The enzyme catalyses 1-(5-phospho-beta-D-ribosyl)-ATP + diphosphate = 5-phospho-alpha-D-ribose 1-diphosphate + ATP. It participates in amino-acid biosynthesis; L-histidine biosynthesis; L-histidine from 5-phospho-alpha-D-ribose 1-diphosphate: step 1/9. In terms of biological role, catalyzes the condensation of ATP and 5-phosphoribose 1-diphosphate to form N'-(5'-phosphoribosyl)-ATP (PR-ATP). Has a crucial role in the pathway because the rate of histidine biosynthesis seems to be controlled primarily by regulation of HisG enzymatic activity. The polypeptide is ATP phosphoribosyltransferase (Lacticaseibacillus casei (strain BL23) (Lactobacillus casei)).